The primary structure comprises 206 residues: Small ribosomal subunit protein uS4 (206 aa).

The interval 28–52 (YLDRRPYAPGQHGQRRGRGRPSDYS) is disordered. An S4 RNA-binding domain is found at 96–171 (RRLDNVVFRM…QKRRRVSPWI (76 aa)).

This sequence belongs to the universal ribosomal protein uS4 family. Part of the 30S ribosomal subunit. Contacts protein S5. The interaction surface between S4 and S5 is involved in control of translational fidelity.

Functionally, one of the primary rRNA binding proteins, it binds directly to 16S rRNA where it nucleates assembly of the body of the 30S subunit. With S5 and S12 plays an important role in translational accuracy. This is Small ribosomal subunit protein uS4 from Deinococcus geothermalis (strain DSM 11300 / CIP 105573 / AG-3a).